Reading from the N-terminus, the 165-residue chain is NADH-quinone oxidoreductase subunit I (165 aa).

2 consecutive 4Fe-4S ferredoxin-type domains span residues 66-98 (HRLTKNEKGDLKCVACDMCATACPANCIFITAT) and 109-138 (SKFTIDLLECVFCGLCVEACPKDAIRMDTG). Residues Cys78, Cys81, Cys84, Cys88, Cys118, Cys121, Cys124, and Cys128 each contribute to the [4Fe-4S] cluster site.

This sequence belongs to the complex I 23 kDa subunit family. As to quaternary structure, NDH-1 is composed of 14 different subunits. Subunits NuoA, H, J, K, L, M, N constitute the membrane sector of the complex. The cofactor is [4Fe-4S] cluster.

Its subcellular location is the cell inner membrane. It carries out the reaction a quinone + NADH + 5 H(+)(in) = a quinol + NAD(+) + 4 H(+)(out). In terms of biological role, NDH-1 shuttles electrons from NADH, via FMN and iron-sulfur (Fe-S) centers, to quinones in the respiratory chain. The immediate electron acceptor for the enzyme in this species is believed to be ubiquinone. Couples the redox reaction to proton translocation (for every two electrons transferred, four hydrogen ions are translocated across the cytoplasmic membrane), and thus conserves the redox energy in a proton gradient. The sequence is that of NADH-quinone oxidoreductase subunit I from Campylobacter fetus subsp. fetus (strain 82-40).